The primary structure comprises 182 residues: Probable nicotinate-nucleotide adenylyltransferase (182 aa).

The protein belongs to the NadD family.

It carries out the reaction nicotinate beta-D-ribonucleotide + ATP + H(+) = deamido-NAD(+) + diphosphate. Its pathway is cofactor biosynthesis; NAD(+) biosynthesis; deamido-NAD(+) from nicotinate D-ribonucleotide: step 1/1. In terms of biological role, catalyzes the reversible adenylation of nicotinate mononucleotide (NaMN) to nicotinic acid adenine dinucleotide (NaAD). The polypeptide is Probable nicotinate-nucleotide adenylyltransferase (Aliarcobacter butzleri (strain RM4018) (Arcobacter butzleri)).